The sequence spans 206 residues: Protein tyrosine phosphatase receptor type C-associated protein (206 aa).

A helical membrane pass occupies residues 34-54; sequence VTVVLLLLLLLLLATGLALAW. Positions 98-173 are disordered; it reads GSTDNDLERQ…PGPASAGGSA (76 aa). Phosphoserine occurs at positions 99 and 153. Low complexity predominate over residues 161–173; the sequence is LGSPGPASAGGSA.

As to quaternary structure, interacts with CD45/PTPRC. Phosphorylated on tyrosine residues.

It localises to the membrane. The sequence is that of Protein tyrosine phosphatase receptor type C-associated protein (PTPRCAP) from Homo sapiens (Human).